The sequence spans 238 residues: Octanoyltransferase (238 aa).

The region spanning 40–220 (AGGSDALLLL…RVCDALDGRL (181 aa)) is the BPL/LPL catalytic domain. Residues 78–85 (RGGKITWH), 150–152 (AIG), and 163–165 (GFA) contribute to the substrate site. Cys181 (acyl-thioester intermediate) is an active-site residue.

The protein belongs to the LipB family.

It is found in the cytoplasm. It carries out the reaction octanoyl-[ACP] + L-lysyl-[protein] = N(6)-octanoyl-L-lysyl-[protein] + holo-[ACP] + H(+). Its pathway is protein modification; protein lipoylation via endogenous pathway; protein N(6)-(lipoyl)lysine from octanoyl-[acyl-carrier-protein]: step 1/2. Catalyzes the transfer of endogenously produced octanoic acid from octanoyl-acyl-carrier-protein onto the lipoyl domains of lipoate-dependent enzymes. Lipoyl-ACP can also act as a substrate although octanoyl-ACP is likely to be the physiological substrate. The chain is Octanoyltransferase from Mycobacterium sp. (strain JLS).